We begin with the raw amino-acid sequence, 186 residues long: Protein GrpE (186 aa).

Belongs to the GrpE family. In terms of assembly, homodimer.

It localises to the cytoplasm. Functionally, participates actively in the response to hyperosmotic and heat shock by preventing the aggregation of stress-denatured proteins, in association with DnaK and GrpE. It is the nucleotide exchange factor for DnaK and may function as a thermosensor. Unfolded proteins bind initially to DnaJ; upon interaction with the DnaJ-bound protein, DnaK hydrolyzes its bound ATP, resulting in the formation of a stable complex. GrpE releases ADP from DnaK; ATP binding to DnaK triggers the release of the substrate protein, thus completing the reaction cycle. Several rounds of ATP-dependent interactions between DnaJ, DnaK and GrpE are required for fully efficient folding. This is Protein GrpE from Novosphingobium aromaticivorans (strain ATCC 700278 / DSM 12444 / CCUG 56034 / CIP 105152 / NBRC 16084 / F199).